The sequence spans 123 residues: WAP four-disulfide core domain protein 5 (123 aa).

The first 24 residues, 1-24, serve as a signal peptide directing secretion; the sequence is MRIQSLLLLGALLAVGSQLPAVFG. WAP domains follow at residues 27-73 and 74-121; these read KGEK…CIPR and VSVK…RDPA. Intrachain disulfides connect cysteine 34–cysteine 62, cysteine 41–cysteine 66, cysteine 49–cysteine 61, cysteine 55–cysteine 70, cysteine 81–cysteine 109, cysteine 88–cysteine 113, cysteine 96–cysteine 108, and cysteine 102–cysteine 117.

Its subcellular location is the secreted. Putative acid-stable proteinase inhibitor. This is WAP four-disulfide core domain protein 5 (WFDC5) from Macaca mulatta (Rhesus macaque).